The sequence spans 511 residues: Maturase K (511 aa).

It belongs to the intron maturase 2 family. MatK subfamily.

Its subcellular location is the plastid. The protein resides in the chloroplast. Functionally, usually encoded in the trnK tRNA gene intron. Probably assists in splicing its own and other chloroplast group II introns. The sequence is that of Maturase K from Chloranthus spicatus (Chulantree).